A 464-amino-acid chain; its full sequence is Protein FAM90A11 (464 aa).

Disordered stretches follow at residues 1–42 (MMAR…DPRL), 70–389 (PATL…HDGA), and 415–437 (HSPE…SEAP). 2 stretches are compositionally biased toward basic and acidic residues: residues 74–89 (GKKE…KPRV) and 97–114 (NKDK…DPQR). Residues 180-197 (LASLSPLRKASLSSSSSL) are compositionally biased toward low complexity. Polar residues predominate over residues 341–356 (GPSTSPQMGRRTSAQV).

It belongs to the FAM90 family.

The polypeptide is Protein FAM90A11 (Homo sapiens (Human)).